The following is a 430-amino-acid chain: KIN17-like protein (430 aa).

The C2H2-type zinc finger occupies 28-50 (CQMCQKQCRDENGFKCHCMSESH). A winged helix-turn-helix (wHTH) region spans residues 51-160 (QRQMQVFGQA…KARLKRKRIK (110 aa)). Residues 147 to 183 (EQAVKARLKRKRIKSDLAEDERQERMIARQIERAQQS) adopt a coiled-coil conformation. Residues 155-158 (KRKR) carry the Nuclear localization signal (NLS) motif. Disordered stretches follow at residues 179 to 230 (RAQQ…ANKA) and 261 to 284 (EEED…GKDA). The span at 209–224 (EYSDSENDHEGQEEDA) shows a compositional bias: acidic residues. The span at 261–278 (EEEDEVSARDKEKEELAK) shows a compositional bias: basic and acidic residues. The stretch at 283-312 (DAINAAEARRSALDELMKEEEKAKERSNRK) forms a coiled coil. The tract at residues 319–370 (GIVVKVMSKSLAEKGYCKQKGVVKRVIDKYVGEIEMLESKHVLRVDQDELET) is C-terminal subdomain A. Residues 376 to 427 (GGLVRIVNGAYRGSNARLLSVDTERFCAKVQVEKGLYDGKVLKAIEYEDICK) are C-terminal subdomain B.

Belongs to the KIN17 family.

It localises to the nucleus. The sequence is that of KIN17-like protein from Oryza sativa subsp. indica (Rice).